Reading from the N-terminus, the 322-residue chain is Atrochrysone carboxyl ACP thioesterase nsrC (322 aa).

Positions 105, 107, 109, and 110 each coordinate Zn(2+). Aspartate 109 acts as the Proton donor/acceptor in catalysis.

This sequence belongs to the metallo-beta-lactamase superfamily. Requires Zn(2+) as cofactor.

It catalyses the reaction atrochrysone carboxyl-[ACP] + H2O = atrochrysone carboxylate + holo-[ACP] + H(+). The protein operates within secondary metabolite biosynthesis. Atrochrysone carboxyl ACP thioesterase; part of the gene cluster that mediates the biosynthesis of the tetrahydroxanthone dimer neosartorin, which exhibits antibacterial activity. The two different monomeric units appear to be synthesized by the same set of enzymes, among which the Baeyer-Villiger monooxygenase nsrF is the key enzyme for the divergence of the biosynthetic routes. The pathway begins with the synthesis of atrochrysone thioester by the polyketide synthase nsrB. The atrochrysone carboxyl ACP thioesterase nsrC then breaks the thioester bond and releases the atrochrysone carboxylic acid from AacuL. Atrochrysone carboxylic acid is decarboxylated by the decarboxylase nsrE, and oxidized by the anthrone oxygenase nsrD to yield emodin. Emodin is then reduced to emodin hydroquinone by the oxidoreductase nsrR. A-ring reduction by the short chain dehydrogenase nsrJ, dehydration by the scytalone dehydratase-like protein nsrI and probable spontaneous re-oxidation, results in overall deoxygenation to chrysophanol. The Baeyer-Villiger monooxygenase nsrF accepts chrysophanol as a substrate to insert one oxygen atom at two different positions to yield the precursors of both monomric units. NsrF is promiscuous/flexible in interacting with the 2 (non methylated and methylated) aromatic rings of chrysophanol, thus diverging the biosynthetic pathway at this point. After the hydrolysis of the lactones, methylesterification by the methyltransferase nsrG yields respectively moniliphenone and 2,2',6'-trihydroxy-4-methyl-6-methoxya-cyldiphenylmethanone. The next steps are the hydroxylation by the FAD-dependent monooxygenase nsrK, followed by isomerization by the monooxygenase nsrQ. The short chain dehydrogenase/reductase nsrO then catalyzes the C-5 ketoreduction to give the xanthone skeleton of blennolide C and 5-acetylblennolide A. The acetyltransferase nsrL has a strict substrate specificity and uses only blennolide A but not blennolide C to yield 5-acetylblennolide A as the single-acetylated product. In the final step of the biosynthesis, the heterodimerization of the 2 xanthones, blennolide C and 5-acetylblennolide A, is catalyzed by the cytochrome P450 monooxygenase nsrP. NsrP can utilize at least three different xanthones as its substrates to perform the dimerization reaction. This Aspergillus novofumigatus (strain IBT 16806) protein is Atrochrysone carboxyl ACP thioesterase nsrC.